The following is an 81-amino-acid chain: Cytochrome c oxidase subunit 7B2, mitochondrial (81 aa).

The N-terminal 25 residues, 1 to 25 (MMFPLARNALSSLKIQSILQSMARH), are a transit peptide targeting the mitochondrion. The Mitochondrial matrix portion of the chain corresponds to 26–33 (SHVKHSPD). A helical transmembrane segment spans residues 34–60 (FHDKYGNAVLASGTAFCVATWVFTATQ). At 61-81 (IGIEWNLSPVGRVTPKEWKHQ) the chain is on the mitochondrial intermembrane side.

This sequence belongs to the cytochrome c oxidase VIIb family. In terms of assembly, component of the cytochrome c oxidase (complex IV, CIV), a multisubunit enzyme composed of 14 subunits. The complex is composed of a catalytic core of 3 subunits MT-CO1, MT-CO2 and MT-CO3, encoded in the mitochondrial DNA, and 11 supernumerary subunits COX4I, COX5A, COX5B, COX6A, COX6B, COX6C, COX7A, COX7B, COX7C, COX8 and NDUFA4, which are encoded in the nuclear genome. The complex exists as a monomer or a dimer and forms supercomplexes (SCs) in the inner mitochondrial membrane with NADH-ubiquinone oxidoreductase (complex I, CI) and ubiquinol-cytochrome c oxidoreductase (cytochrome b-c1 complex, complex III, CIII), resulting in different assemblies (supercomplex SCI(1)III(2)IV(1) and megacomplex MCI(2)III(2)IV(2)).

It localises to the mitochondrion inner membrane. Its pathway is energy metabolism; oxidative phosphorylation. In terms of biological role, component of the cytochrome c oxidase, the last enzyme in the mitochondrial electron transport chain which drives oxidative phosphorylation. The respiratory chain contains 3 multisubunit complexes succinate dehydrogenase (complex II, CII), ubiquinol-cytochrome c oxidoreductase (cytochrome b-c1 complex, complex III, CIII) and cytochrome c oxidase (complex IV, CIV), that cooperate to transfer electrons derived from NADH and succinate to molecular oxygen, creating an electrochemical gradient over the inner membrane that drives transmembrane transport and the ATP synthase. Cytochrome c oxidase is the component of the respiratory chain that catalyzes the reduction of oxygen to water. Electrons originating from reduced cytochrome c in the intermembrane space (IMS) are transferred via the dinuclear copper A center (CU(A)) of subunit 2 and heme A of subunit 1 to the active site in subunit 1, a binuclear center (BNC) formed by heme A3 and copper B (CU(B)). The BNC reduces molecular oxygen to 2 water molecules using 4 electrons from cytochrome c in the IMS and 4 protons from the mitochondrial matrix. The sequence is that of Cytochrome c oxidase subunit 7B2, mitochondrial (COX7B2) from Homo sapiens (Human).